Here is a 537-residue protein sequence, read N- to C-terminus: Biotin carboxylase, chloroplastic (537 aa).

The transit peptide at 1 to 71 (MDASMITNSK…ATSGGLGVTC (71 aa)) directs the protein to the chloroplast. Residues Lys188, Lys230, 236–237 (GG), 272–275 (EKFV), and His280 contribute to the ATP site. The ATP-grasp domain maps to 192–389 (RETMKNAGVP…LIEEQIRVAM (198 aa)). Lys309 contacts hydrogencarbonate. Residues Glu347 and Glu360 each contribute to the ATP site. Glu347, Glu360, and Asn362 together coordinate Mg(2+). 3 residues coordinate Mn(2+): Glu347, Glu360, and Asn362. Hydrogencarbonate-binding residues include Arg364, Val367, and Arg410. Arg364 is a catalytic residue. Residue Arg410 coordinates biotin.

As to quaternary structure, acetyl-CoA carboxylase is a heterohexamer composed of biotin carboxyl carrier protein, biotin carboxylase and two subunits each of ACCase subunit alpha and ACCase plastid-coded subunit beta (accD). It depends on Mg(2+) as a cofactor. Requires Mn(2+) as cofactor. Accumulates in fatty acids synthesizing tissues. Mostly expressed in siliques, developing leaves, and flowers, present in roots and embryos (especially at torpedo stage), and, to a lower extent, in mature leaves.

It localises to the plastid. Its subcellular location is the chloroplast. The catalysed reaction is N(6)-biotinyl-L-lysyl-[protein] + hydrogencarbonate + ATP = N(6)-carboxybiotinyl-L-lysyl-[protein] + ADP + phosphate + H(+). It participates in lipid metabolism; malonyl-CoA biosynthesis; malonyl-CoA from acetyl-CoA: step 1/1. Its function is as follows. This protein is a component of the acetyl coenzyme A carboxylase complex; first, biotin carboxylase catalyzes the carboxylation of the carrier protein and then the transcarboxylase transfers the carboxyl group to form malonyl-CoA. The protein is Biotin carboxylase, chloroplastic (CAC2) of Arabidopsis thaliana (Mouse-ear cress).